A 533-amino-acid polypeptide reads, in one-letter code: Probable lipid II flippase MurJ (533 aa).

13 helical membrane passes run 25–45 (ETLM…YAAF), 90–110 (VLFS…PLLV), 131–151 (LAAV…MSGM), 158–178 (FFAA…ALFY), 192–212 (YLSW…YIGV), 233–253 (LLLL…NLVI), 274–294 (IYQL…LPEL), 316–336 (FVLF…DDII), 350–370 (TTLV…FVLI), 389–409 (YTAI…PVLA), 412–432 (GIAL…FVTL), 449–469 (AMLL…SHRW), and 484–504 (GVLG…AFLI).

This sequence belongs to the MurJ/MviN family.

It is found in the cell inner membrane. It participates in cell wall biogenesis; peptidoglycan biosynthesis. Functionally, involved in peptidoglycan biosynthesis. Transports lipid-linked peptidoglycan precursors from the inner to the outer leaflet of the cytoplasmic membrane. The protein is Probable lipid II flippase MurJ of Rhizobium tropici.